Here is a 90-residue protein sequence, read N- to C-terminus: Acylphosphatase (90 aa).

The Acylphosphatase-like domain maps to 3–90 (AVHMNASGQV…FEGQDFIVKY (88 aa)). Catalysis depends on residues R18 and N36.

This sequence belongs to the acylphosphatase family.

It catalyses the reaction an acyl phosphate + H2O = a carboxylate + phosphate + H(+). The chain is Acylphosphatase (acyP) from Pediococcus pentosaceus (strain ATCC 25745 / CCUG 21536 / LMG 10740 / 183-1w).